A 628-amino-acid polypeptide reads, in one-letter code: uncharacterized protein (628 aa).

Belongs to the ATP-dependent AMP-binding enzyme family.

This is an uncharacterized protein from Pseudomonas aeruginosa (strain ATCC 15692 / DSM 22644 / CIP 104116 / JCM 14847 / LMG 12228 / 1C / PRS 101 / PAO1).